The following is a 355-amino-acid chain: MYNFVKIFRSNFIDINAANKLEIFLKTILRIYKTPARTHLLAHAADISAIYAVREIYNYMKNDEEGRIILKEKPLLIRQDIQFNELKKLPKNTLGYKYMEFLETYKLHAHDREVSHFFTDLNYSYILTRYRQIHDIGHVVYNLNISIESEAALKVIELVQTKLPITALAILIAPLMTPLYRFQYIFKDSIPSNFLTPNFDYTYNDAYNYVDELSIKQYEYNLTDYFHVDKRDDQKFYSKMYQYYLDNINNSSAVRGSIIYGFENKSNNDIIYDHPNREYIFLKNLKKKHLLFQYKPRKNLLRELYPWAYMAGVSTTKPLHSIHIEKWLDKDIDLFRRTYNISPLPDHLNLMAGIN.

His134, Asp135, His138, and Glu150 together coordinate Zn(2+).

This sequence belongs to the COQ4 family. As to quaternary structure, component of a multi-subunit COQ enzyme complex. Zn(2+) serves as cofactor.

The protein localises to the mitochondrion inner membrane. It catalyses the reaction a 4-hydroxy-3-methoxy-5-(all-trans-polyprenyl)benzoate + H(+) = a 2-methoxy-6-(all-trans-polyprenyl)phenol + CO2. It participates in cofactor biosynthesis; ubiquinone biosynthesis. Functionally, lyase that catalyzes the C1-decarboxylation of 4-hydroxy-3-methoxy-5-(all-trans-polyprenyl)benzoic acid into 2-methoxy-6-(all-trans-polyprenyl)phenol during ubiquinone biosynthesis. The polypeptide is Ubiquinone biosynthesis protein COQ4 homolog, mitochondrial (Plasmodium knowlesi (strain H)).